The sequence spans 490 residues: Protein nucleotidyltransferase YdiU (490 aa).

Positions 89, 91, 92, 112, 124, 125, 175, and 182 each coordinate ATP. The active-site Proton acceptor is the D251. Residues N252 and D261 each contribute to the Mg(2+) site. Residue D261 coordinates ATP.

This sequence belongs to the SELO family. Requires Mg(2+) as cofactor. Mn(2+) serves as cofactor.

It catalyses the reaction L-seryl-[protein] + ATP = 3-O-(5'-adenylyl)-L-seryl-[protein] + diphosphate. The catalysed reaction is L-threonyl-[protein] + ATP = 3-O-(5'-adenylyl)-L-threonyl-[protein] + diphosphate. The enzyme catalyses L-tyrosyl-[protein] + ATP = O-(5'-adenylyl)-L-tyrosyl-[protein] + diphosphate. It carries out the reaction L-histidyl-[protein] + UTP = N(tele)-(5'-uridylyl)-L-histidyl-[protein] + diphosphate. It catalyses the reaction L-seryl-[protein] + UTP = O-(5'-uridylyl)-L-seryl-[protein] + diphosphate. The catalysed reaction is L-tyrosyl-[protein] + UTP = O-(5'-uridylyl)-L-tyrosyl-[protein] + diphosphate. Functionally, nucleotidyltransferase involved in the post-translational modification of proteins. It can catalyze the addition of adenosine monophosphate (AMP) or uridine monophosphate (UMP) to a protein, resulting in modifications known as AMPylation and UMPylation. The protein is Protein nucleotidyltransferase YdiU of Vibrio vulnificus (strain CMCP6).